Reading from the N-terminus, the 480-residue chain is Aspartyl/glutamyl-tRNA(Asn/Gln) amidotransferase subunit B (480 aa).

Belongs to the GatB/GatE family. GatB subfamily. As to quaternary structure, heterotrimer of A, B and C subunits.

The catalysed reaction is L-glutamyl-tRNA(Gln) + L-glutamine + ATP + H2O = L-glutaminyl-tRNA(Gln) + L-glutamate + ADP + phosphate + H(+). It carries out the reaction L-aspartyl-tRNA(Asn) + L-glutamine + ATP + H2O = L-asparaginyl-tRNA(Asn) + L-glutamate + ADP + phosphate + 2 H(+). In terms of biological role, allows the formation of correctly charged Asn-tRNA(Asn) or Gln-tRNA(Gln) through the transamidation of misacylated Asp-tRNA(Asn) or Glu-tRNA(Gln) in organisms which lack either or both of asparaginyl-tRNA or glutaminyl-tRNA synthetases. The reaction takes place in the presence of glutamine and ATP through an activated phospho-Asp-tRNA(Asn) or phospho-Glu-tRNA(Gln). The chain is Aspartyl/glutamyl-tRNA(Asn/Gln) amidotransferase subunit B from Streptococcus pneumoniae (strain CGSP14).